We begin with the raw amino-acid sequence, 266 residues long: Mitochondrial S-adenosylmethionine carrier protein (266 aa).

3 Solcar repeats span residues 4 to 77 (RELC…AKRF), 85 to 167 (LSPI…LKNL), and 176 to 264 (VDCW…VRSS). 6 helical membrane-spanning segments follow: residues 5–25 (ELCASLLAGGAAGMSVDLILF), 49–69 (IYAGVPSTAVGSFPNAAAFFV), 84–104 (YLSPIIHMAAAFLGELVACLI), 141–161 (RGYKSTVLREIPFSLVQFPLW), 181–201 (SAVCGAFAGGFAAAVTTPLDV), and 237–257 (FAGVIPRMTMISLGGFIFLGA).

Belongs to the mitochondrial carrier (TC 2.A.29) family.

Its subcellular location is the mitochondrion inner membrane. It catalyses the reaction S-adenosyl-L-homocysteine(out) + S-adenosyl-L-methionine(in) = S-adenosyl-L-homocysteine(in) + S-adenosyl-L-methionine(out). Functionally, mitochondrial S-adenosyl-L-methionine/S-adenosyl-L-homocysteine antiporter. Mediates the exchange of cytosolic S-adenosyl-L-methionine, the predominant methyl-group donor for macromolecule methylation processes, for mitochondrial S-adenosylhomocysteine(SAH), a by-product of methylation reactions. The polypeptide is Mitochondrial S-adenosylmethionine carrier protein (slc25a26) (Xenopus laevis (African clawed frog)).